The chain runs to 161 residues: Large ribosomal subunit protein bL17 (161 aa).

Basic and acidic residues predominate over residues 132-144 (ARAKRAEDNRKAL). The tract at residues 132 to 161 (ARAKRAEDNRKALEAQQAQAEAETTGETKA) is disordered. Over residues 145-161 (EAQQAQAEAETTGETKA) the composition is skewed to low complexity.

This sequence belongs to the bacterial ribosomal protein bL17 family. In terms of assembly, part of the 50S ribosomal subunit. Contacts protein L32.

In Koribacter versatilis (strain Ellin345), this protein is Large ribosomal subunit protein bL17.